The following is a 485-amino-acid chain: MAANTGIIKGNTHEWEMVVGLEVHAQVISNSKLFSGASTGFCSEPNTQVALFDVAMPGTLPVLNARCVEQAVRTSLALSCEVHKYSVFDRKNYFYPDLASGYQITQFYFPIATDGYITLDECCSKDVRISRIHLEQDAGKSMHVGDKTYLDFNRAGVALMEIVSAPDFRSPEEAAEYIKKLRIILRAIGTCDGDMENGSLRCDANVSVRKVGDSNLGARSEIKNLNSIKHLAQAIRHEACRQVEVLESGGVVSQSTMLFDVDTCTTRSMREKEDACDYRYFPDPDLLPLELTTAFIDNIRASLPELPSEKKRRYMQDIGLSRYDADILSSDKDVSAYFESVVAKHAPDLAVPWITGELFGALNKRGSSIADSPVSAGRLVELLDLVADGTISGKMAKQVFALMFETEKSASDIVREQGLCQITSEETLAPIVDRIISESPDEVAEYRQGKTKLLGYFVGKVMKETNGQANPGLVNTLIKRRLAED.

This sequence belongs to the GatB/GatE family. GatB subfamily. In terms of assembly, heterotrimer of A, B and C subunits.

The catalysed reaction is L-glutamyl-tRNA(Gln) + L-glutamine + ATP + H2O = L-glutaminyl-tRNA(Gln) + L-glutamate + ADP + phosphate + H(+). It catalyses the reaction L-aspartyl-tRNA(Asn) + L-glutamine + ATP + H2O = L-asparaginyl-tRNA(Asn) + L-glutamate + ADP + phosphate + 2 H(+). Functionally, allows the formation of correctly charged Asn-tRNA(Asn) or Gln-tRNA(Gln) through the transamidation of misacylated Asp-tRNA(Asn) or Glu-tRNA(Gln) in organisms which lack either or both of asparaginyl-tRNA or glutaminyl-tRNA synthetases. The reaction takes place in the presence of glutamine and ATP through an activated phospho-Asp-tRNA(Asn) or phospho-Glu-tRNA(Gln). The polypeptide is Aspartyl/glutamyl-tRNA(Asn/Gln) amidotransferase subunit B (Anaplasma marginale (strain St. Maries)).